Reading from the N-terminus, the 466-residue chain is Histone acetyltransferase type B catalytic subunit DDB_G0275159 (466 aa).

An N-acetyltransferase domain is found at 169 to 366 (AVFRYHEKLQ…FRIAIKKRLY (198 aa)). Acetyl-CoA contacts are provided by residues 240 to 242 (YLI) and 247 to 253 (QRMGHGK). The active-site Proton donor/acceptor is the Glu-279. Residues 372–459 (DSEQIEKMKQ…LEENYHKTLS (88 aa)) are a coiled coil.

The protein belongs to the HAT1 family.

It catalyses the reaction L-lysyl-[protein] + acetyl-CoA = N(6)-acetyl-L-lysyl-[protein] + CoA + H(+). This is Histone acetyltransferase type B catalytic subunit DDB_G0275159 from Dictyostelium discoideum (Social amoeba).